A 591-amino-acid polypeptide reads, in one-letter code: Tricyclene synthase, chloroplastic (591 aa).

A chloroplast-targeting transit peptide spans 1–45 (MATLLQIGSGVIYSNALRKTLRRPQSSTCIIVTETTPCNKSPTVQ). (2E)-geranyl diphosphate is bound by residues Arg-302, Asp-339, Asp-343, Arg-481, and Asn-484. Mg(2+) is bound by residues Asp-339 and Asp-343. Residues 339-343 (DDIYD) carry the DDXXD motif motif. Asn-484, Thr-488, and Glu-492 together coordinate Mg(2+).

This sequence belongs to the terpene synthase family. Tpsb subfamily. The cofactor is Mg(2+). Mn(2+) is required as a cofactor. In terms of tissue distribution, predominantly expressed in flowers but also in leaves, siliques and in stems.

It is found in the plastid. It localises to the chloroplast stroma. It carries out the reaction (2E)-geranyl diphosphate = beta-myrcene + diphosphate. The enzyme catalyses (2E)-geranyl diphosphate = tricyclene + diphosphate. It catalyses the reaction (2E)-geranyl diphosphate = (E)-beta-ocimene + diphosphate. It functions in the pathway secondary metabolite biosynthesis; terpenoid biosynthesis. Functionally, involved in monoterpene (C10) biosynthesis. The major product is beta-myrcene (56%) followed by (E)-beta-ocimene (20%) and minor amounts (less than 5%) of the cyclic monoterpene (-)-limonene, (+)-limonene, 2-carene and tricyclene. In Arabidopsis thaliana (Mouse-ear cress), this protein is Tricyclene synthase, chloroplastic.